A 238-amino-acid polypeptide reads, in one-letter code: Phosphoribosylaminoimidazole-succinocarboxamide synthase (238 aa).

This sequence belongs to the SAICAR synthetase family.

It catalyses the reaction 5-amino-1-(5-phospho-D-ribosyl)imidazole-4-carboxylate + L-aspartate + ATP = (2S)-2-[5-amino-1-(5-phospho-beta-D-ribosyl)imidazole-4-carboxamido]succinate + ADP + phosphate + 2 H(+). The protein operates within purine metabolism; IMP biosynthesis via de novo pathway; 5-amino-1-(5-phospho-D-ribosyl)imidazole-4-carboxamide from 5-amino-1-(5-phospho-D-ribosyl)imidazole-4-carboxylate: step 1/2. This chain is Phosphoribosylaminoimidazole-succinocarboxamide synthase, found in Persephonella marina (strain DSM 14350 / EX-H1).